The sequence spans 296 residues: NAD kinase (296 aa).

Aspartate 72 serves as the catalytic Proton acceptor. NAD(+)-binding positions include 72–73, 146–147, arginine 157, lysine 174, aspartate 176, 187–192, and glutamine 247; these read DG, ND, and TAYALS.

Belongs to the NAD kinase family. A divalent metal cation is required as a cofactor.

The protein resides in the cytoplasm. The enzyme catalyses NAD(+) + ATP = ADP + NADP(+) + H(+). Functionally, involved in the regulation of the intracellular balance of NAD and NADP, and is a key enzyme in the biosynthesis of NADP. Catalyzes specifically the phosphorylation on 2'-hydroxyl of the adenosine moiety of NAD to yield NADP. The polypeptide is NAD kinase (Pseudomonas fluorescens (strain SBW25)).